The sequence spans 1083 residues: Error-prone DNA polymerase (1083 aa).

This sequence belongs to the DNA polymerase type-C family. DnaE2 subfamily.

The protein localises to the cytoplasm. The enzyme catalyses DNA(n) + a 2'-deoxyribonucleoside 5'-triphosphate = DNA(n+1) + diphosphate. In terms of biological role, DNA polymerase involved in damage-induced mutagenesis and translesion synthesis (TLS). It is not the major replicative DNA polymerase. The sequence is that of Error-prone DNA polymerase from Xanthomonas oryzae pv. oryzae (strain PXO99A).